The sequence spans 437 residues: Glutamate-1-semialdehyde 2,1-aminomutase (437 aa).

Lys-274 is subject to N6-(pyridoxal phosphate)lysine.

Belongs to the class-III pyridoxal-phosphate-dependent aminotransferase family. HemL subfamily. As to quaternary structure, homodimer. Pyridoxal 5'-phosphate is required as a cofactor.

The protein localises to the cytoplasm. It catalyses the reaction (S)-4-amino-5-oxopentanoate = 5-aminolevulinate. It functions in the pathway porphyrin-containing compound metabolism; protoporphyrin-IX biosynthesis; 5-aminolevulinate from L-glutamyl-tRNA(Glu): step 2/2. The polypeptide is Glutamate-1-semialdehyde 2,1-aminomutase (Paracidovorax citrulli (strain AAC00-1) (Acidovorax citrulli)).